Reading from the N-terminus, the 312-residue chain is Pantothenate kinase (312 aa).

Residue 97 to 104 coordinates ATP; sequence GSVAVGKS.

This sequence belongs to the prokaryotic pantothenate kinase family.

The protein localises to the cytoplasm. It carries out the reaction (R)-pantothenate + ATP = (R)-4'-phosphopantothenate + ADP + H(+). Its pathway is cofactor biosynthesis; coenzyme A biosynthesis; CoA from (R)-pantothenate: step 1/5. This is Pantothenate kinase from Mycobacterium bovis (strain BCG / Pasteur 1173P2).